The sequence spans 945 residues: Poly [ADP-ribose] polymerase 1 (945 aa).

A PARP-type 1 zinc finger spans residues 10 to 96 (YAIEYAKSGR…KLRQEIQHFK (87 aa)). 4 residues coordinate Zn(2+): Cys22, Cys25, His54, and Cys57. A PARP-type 2; degenerate zinc finger spans residues 117 to 183 (IKTEKSLSNR…DYEENFKIKA (67 aa)). The interval 195 to 251 (RRSTEPATPASASPTPPEAETPVLSAEGSPESSNKRPASSEIIEIDGEGNPDENDFA) is disordered. The segment covering 237 to 248 (IEIDGEGNPDEN) has biased composition (acidic residues). The 140-residue stretch at 258 to 397 (KEARLMEVQK…NQMSERLYIG (140 aa)) folds into the PADR1 zinc-binding domain. The interval 324–369 (GCPIICQTCSNGKIVYNSSCRTYVCTGYATEYSKCTYESKNPIRTP) is zinc ribbon. Residues Cys329, Cys332, Cys348, and Cys358 each contribute to the Zn(2+) site. Positions 464–563 (RCHVFKNEID…KHFRKMPGMF (100 aa)) constitute a WGR domain. One can recognise a PARP alpha-helical domain in the interval 586–704 (KTLLPKSVKE…DIKFAYDQIS (119 aa)). Residues 717–945 (DPVDINYQKL…RVKMHHARHL (229 aa)) form the PARP catalytic domain.

The protein belongs to the ARTD/PARP family.

The protein localises to the nucleus. It catalyses the reaction NAD(+) + (ADP-D-ribosyl)n-acceptor = nicotinamide + (ADP-D-ribosyl)n+1-acceptor + H(+).. The enzyme catalyses L-aspartyl-[protein] + NAD(+) = 4-O-(ADP-D-ribosyl)-L-aspartyl-[protein] + nicotinamide. It carries out the reaction L-glutamyl-[protein] + NAD(+) = 5-O-(ADP-D-ribosyl)-L-glutamyl-[protein] + nicotinamide. With respect to regulation, inhibited by N-(6-oxo-5,6-dihydrophenanthridin-2-yl)-N,N-dimethylacetamide HCl (PJ34), 1,5-dihydroxyisoquinoline (DHQ) and 3-aminobenzamide (3AB). Poly[ADP-ribose] polymerase modifies various nuclear proteins by poly(ADP-ribosyl)ation, a post-translational modification synthesized after DNA damage that appears as an obligatory step in a detection/signaling pathway leading to the reparation of DNA strand breaks and programmed cell death. Involved in protection of the genome against mutations. This is Poly [ADP-ribose] polymerase 1 from Caenorhabditis elegans.